A 123-amino-acid polypeptide reads, in one-letter code: Plasminogen (123 aa).

One can recognise a Kringle domain in the interval 40–118; the sequence is DCYHGNGQSY…RWEFCNLKKC (79 aa). Cystine bridges form between Cys-41-Cys-118, Cys-62-Cys-101, and Cys-90-Cys-113.

The protein belongs to the peptidase S1 family. Plasminogen subfamily. As to quaternary structure, interacts with CSPG4 and AMOT. Interacts (via the Kringle domains) with HRG; the interaction tethers PLG to the cell surface and enhances its activation. Interacts (via Kringle 4 domain) with ADA; the interaction stimulates PLG activation when in complex with DPP4. Angiostatin: Interacts with ATP5F1A; the interaction inhibits most of the angiogenic effects of angiostatin.

It localises to the secreted. The enzyme catalyses Preferential cleavage: Lys-|-Xaa &gt; Arg-|-Xaa, higher selectivity than trypsin. Converts fibrin into soluble products.. Its activity is regulated as follows. Converted into plasmin by plasminogen activators, both plasminogen and its activator being bound to fibrin. Cannot be activated with streptokinase. In terms of biological role, plasmin dissolves the fibrin of blood clots and acts as a proteolytic factor in a variety of other processes including embryonic development, tissue remodeling, tumor invasion, and inflammation. In ovulation, weakens the walls of the Graafian follicle. It activates the urokinase-type plasminogen activator, collagenases and several complement zymogens, such as C1, C4 and C5. Cleavage of fibronectin and laminin leads to cell detachment and apoptosis. Also cleaves fibrin, thrombospondin and von Willebrand factor. Its role in tissue remodeling and tumor invasion may be modulated by CSPG4. Binds to cells. The polypeptide is Plasminogen (PLG) (Capra hircus (Goat)).